Consider the following 377-residue polypeptide: MGAAVTLNRIKIAPGIADIRDKYMELGFNYPEYNRAVKFAEESYTYYYETSPGEIKPKFCLIDGMSIDHCSSFIVPEFAKQYVLIHGEPCSSFKFRPGSLIYYQNEVTPEYIKDLKHATDYIASGQRCHFIKKDYLLGDSDSVAKCCSKTNTKHCPKIFNNNYKTEHCDDFMTGFCRNDPGNPNCLEWLRAKRKPAMSTYSDICSKHMDARYCSEFIRIIRPDYFTFGDTALYVFCNDHKGNRNCWCANYPKSNSGDKYLGPRVCWLHECTDESRDRKWLYYNQDVQRTRCKYVGCTINVNSLALKNSQAELTSNCTRTTSAVGDVHPGEPVVKDKIKLPTWLGAAITLVVISVIFYFISIYSRPKIKTNDINVRRR.

G2 carries N-myristoyl glycine; by host lipidation. The Virion surface segment spans residues 2–342 (GAAVTLNRIK…VKDKIKLPTW (341 aa)). Residues 343–363 (LGAAITLVVISVIFYFISIYS) form a helical; Signal-anchor for type II membrane protein membrane-spanning segment. Residues 364–377 (RPKIKTNDINVRRR) lie on the Intravirion side of the membrane.

It belongs to the orthopoxvirus OPG143 family. As to quaternary structure, part of a stable entry-fusion complex (EFC) which is at least composed of proteins OPG143, OPG147, OPG155, OPG086, OPG094, OPG107, OPG104, and OPG099. Formation of the viral membrane is necessary for the assembly of the complex. Interacts with OPG094. Interacts with OPG153. Most cysteines are linked by disulfide bonds. They are created by the viral disulfide bond formation pathway, a poxvirus-specific redox pathway that operates on the cytoplasmic side of the MV membranes.

The protein resides in the virion membrane. Envelope protein part of the entry-fusion complex responsible for the virus membrane fusion with host cell membrane during virus entry. Also plays a role in cell-cell fusion (syncytium formation). In Vaccinia virus (strain Western Reserve) (VACV), this protein is Virion membrane protein OPG143 (OPG143).